The following is a 366-amino-acid chain: Pyruvate dehydrogenase E1 component subunit beta, mitochondrial (366 aa).

Residues 1-33 (MFSRLPTSLARNVARRAPTSFVRPSAAAAALRF) constitute a mitochondrion transit peptide. Glu-95 serves as a coordination point for thiamine diphosphate. The K(+) site is built by Ala-196, Ile-197, Asp-199, and Asn-201.

In terms of assembly, pyruvate dehydrogenase (E1) is a tetramer of 2 alpha and 2 beta subunits. Eukaryotic pyruvate dehydrogenase (PDH) complexes are organized as a core consisting of the oligomeric dihydrolipoamide acetyl-transferase (E2), around which are arranged multiple copies of pyruvate dehydrogenase (E1), dihydrolipoamide dehydrogenase (E3) and protein X (E3BP) bound by non-covalent bonds. It depends on thiamine diphosphate as a cofactor.

The protein resides in the mitochondrion matrix. The enzyme catalyses N(6)-[(R)-lipoyl]-L-lysyl-[protein] + pyruvate + H(+) = N(6)-[(R)-S(8)-acetyldihydrolipoyl]-L-lysyl-[protein] + CO2. Its function is as follows. The pyruvate dehydrogenase complex catalyzes the overall conversion of pyruvate to acetyl-CoA and CO(2). The chain is Pyruvate dehydrogenase E1 component subunit beta, mitochondrial (PDB1) from Saccharomyces cerevisiae (strain ATCC 204508 / S288c) (Baker's yeast).